The sequence spans 129 residues: Cocaine- and amphetamine-regulated transcript protein (129 aa).

An N-terminal signal peptide occupies residues 1–27 (MESSRLRLLPVLGAALLLLLPLLGAGA). Position 41 is a phosphotyrosine (Tyr-41). Ser-48 bears the Phosphoserine mark. Disulfide bonds link Cys-95–Cys-113, Cys-101–Cys-121, and Cys-115–Cys-128.

The protein belongs to the CART family. Neuroendocrine tissues. Predominantly expressed in the hypothalamus, pituitary, and longitudinal muscle-myenteric plexus. Abundant expression is also seen in the midbrain/thalamus and eye. A lower level expression is seen in the other brain regions and adrenal.

The protein localises to the secreted. In terms of biological role, satiety factor closely associated with the actions of leptin and neuropeptide y; this anorectic peptide inhibits both normal and starvation-induced feeding and completely blocks the feeding response induced by neuropeptide Y and regulated by leptin in the hypothalamus. The protein is Cocaine- and amphetamine-regulated transcript protein (Cartpt) of Rattus norvegicus (Rat).